Here is a 32-residue protein sequence, read N- to C-terminus: MTTSMLNAKLLPTAPSAAVVVVRVVVVVGNAP.

Its function is as follows. This protein is involved in control of the biosynthesis of isoleucine, leucine, and valine. In Escherichia coli (strain K12), this protein is ilv operon leader peptide (ivbL).